A 520-amino-acid polypeptide reads, in one-letter code: Sterile alpha motif domain-containing protein 3 (520 aa).

In terms of domain architecture, SAM spans 4–71 (WSVEQVCSWL…KYKQNTQGLK (68 aa)). Positions 85–114 (TEAARDYRDEESSSPARHGEQMPSFYPAEN) are disordered.

The protein is Sterile alpha motif domain-containing protein 3 (SAMD3) of Homo sapiens (Human).